A 432-amino-acid polypeptide reads, in one-letter code: Enolase (432 aa).

A (2R)-2-phosphoglycerate-binding site is contributed by Gln163. The active-site Proton donor is the Glu205. Mg(2+) is bound by residues Asp242, Glu289, and Asp316. (2R)-2-phosphoglycerate contacts are provided by Lys341, Arg370, Ser371, and Lys392. The active-site Proton acceptor is the Lys341.

Belongs to the enolase family. The cofactor is Mg(2+). Post-translationally, probably phosphorylated.

The protein resides in the cytoplasm. It localises to the secreted. It is found in the cell surface. It carries out the reaction (2R)-2-phosphoglycerate = phosphoenolpyruvate + H2O. Its pathway is carbohydrate degradation; glycolysis; pyruvate from D-glyceraldehyde 3-phosphate: step 4/5. In terms of biological role, catalyzes the reversible conversion of 2-phosphoglycerate (2-PG) into phosphoenolpyruvate (PEP). It is essential for the degradation of carbohydrates via glycolysis. Its function is as follows. 'Moonlights' as a plasminogen receptor. Binds plasminogen and human salivary mucin MG2 when expressed on the bacterial cell surface, potentially allowing the bacterium to acquire surface-associated proteolytic activity that may help the dissemination through oral tissues and entrance into the blood stream. The polypeptide is Enolase (Streptococcus mutans serotype c (strain ATCC 700610 / UA159)).